The following is a 187-amino-acid chain: Sliding-clamp-loader small subunit (187 aa).

This sequence belongs to the Tevenvirinae sliding-clamp-loader small subunit family. In terms of assembly, the sliding-clamp-loader consists of 4 large subunits and 1 small subunit. Interacts with the sliding clamp; this interaction allows the sliding-clamp-loader to open the sliding clamp. Part of the replicase complex that includes the DNA polymerase, the polymerase clamp, the clamp loader complex, the single-stranded DNA binding protein, the primase, the helicase and the helicase assembly factor.

In terms of biological role, forms the sliding-clamp-loader together with the small subunit. The clamp loader holds the clamp in an open conformation and places it onto the DNA. The protein is Sliding-clamp-loader small subunit (62) of Escherichia coli (Bacteriophage T4).